The chain runs to 360 residues: Histidinol-phosphate aminotransferase (360 aa).

K222 carries the N6-(pyridoxal phosphate)lysine modification.

Belongs to the class-II pyridoxal-phosphate-dependent aminotransferase family. Histidinol-phosphate aminotransferase subfamily. In terms of assembly, homodimer. Requires pyridoxal 5'-phosphate as cofactor.

The enzyme catalyses L-histidinol phosphate + 2-oxoglutarate = 3-(imidazol-4-yl)-2-oxopropyl phosphate + L-glutamate. It functions in the pathway amino-acid biosynthesis; L-histidine biosynthesis; L-histidine from 5-phospho-alpha-D-ribose 1-diphosphate: step 7/9. This chain is Histidinol-phosphate aminotransferase, found in Listeria monocytogenes serotype 4b (strain CLIP80459).